A 566-amino-acid chain; its full sequence is 2-isopropylmalate synthase (566 aa).

One can recognise a Pyruvate carboxyltransferase domain in the interval 32-306 (PLWCAVDLRD…DPQIDFSNID (275 aa)). The Mg(2+) site is built by Asp41, His245, His247, and Asn281. The interval 451–566 (PVRPLERIKQ…VVSAINRASR (116 aa)) is regulatory domain.

It belongs to the alpha-IPM synthase/homocitrate synthase family. LeuA type 2 subfamily. Homodimer. It depends on Mg(2+) as a cofactor.

It is found in the cytoplasm. The catalysed reaction is 3-methyl-2-oxobutanoate + acetyl-CoA + H2O = (2S)-2-isopropylmalate + CoA + H(+). Its pathway is amino-acid biosynthesis; L-leucine biosynthesis; L-leucine from 3-methyl-2-oxobutanoate: step 1/4. Catalyzes the condensation of the acetyl group of acetyl-CoA with 3-methyl-2-oxobutanoate (2-ketoisovalerate) to form 3-carboxy-3-hydroxy-4-methylpentanoate (2-isopropylmalate). The sequence is that of 2-isopropylmalate synthase from Mycobacterium ulcerans (strain Agy99).